The following is a 491-amino-acid chain: Glutathione synthetase GSH2 (491 aa).

R128 contributes to the substrate binding site. E146 lines the ATP pocket. Mg(2+) is bound by residues E146 and N148. Residues 150–153 (VSVS), 228–230 (ERN), Q234, and 285–288 (RTGY) contribute to the substrate site. Residues K324, 382-391 (KPQREGGGNN), Y393, 415-418 (MELI), and E442 each bind ATP. Residue E386 coordinates Mg(2+). Position 467 (R467) interacts with substrate. Residues K469 and E475 each coordinate ATP. Position 478–479 (478–479 (VA)) interacts with substrate.

Belongs to the eukaryotic GSH synthase family. In terms of assembly, homodimer. Mg(2+) serves as cofactor.

It carries out the reaction gamma-L-glutamyl-L-cysteine + glycine + ATP = glutathione + ADP + phosphate + H(+). Its pathway is sulfur metabolism; glutathione biosynthesis; glutathione from L-cysteine and L-glutamate: step 2/2. The protein is Glutathione synthetase GSH2 (GSH2) of Saccharomyces cerevisiae (strain ATCC 204508 / S288c) (Baker's yeast).